Consider the following 1218-residue polypeptide: Coatomer subunit alpha-1 (1218 aa).

9 WD repeats span residues 7 to 48 (TKSN…DRFD), 49 to 88 (EHDG…CLFT), 91 to 132 (GHLD…AVLT), 133 to 172 (GHNH…KKTV), 202 to 241 (GHDR…AWEV), 246 to 285 (GHMN…GIQT), 288 to 326 (REHD…PAFS), 363 to 404 (SLNQ…AGRA), and 450 to 489 (PLPI…GELQ). Positions 857–882 (NGGDGFDAEEGEANEEDGEEGGWDLE) are disordered. A compositionally biased stretch (acidic residues) spans 862-882 (FDAEEGEANEEDGEEGGWDLE).

Oligomeric complex that consists of at least the alpha, beta, beta', gamma, delta, epsilon and zeta subunits.

It is found in the cytoplasm. The protein resides in the golgi apparatus membrane. It localises to the cytoplasmic vesicle. Its subcellular location is the COPI-coated vesicle membrane. Functionally, the coatomer is a cytosolic protein complex that binds to dilysine motifs and reversibly associates with Golgi non-clathrin-coated vesicles, which further mediate biosynthetic protein transport from the ER, via the Golgi up to the trans Golgi network. Coatomer complex is required for budding from Golgi membranes, and is essential for the retrograde Golgi-to-ER transport of dilysine-tagged proteins. This Oryza sativa subsp. japonica (Rice) protein is Coatomer subunit alpha-1.